We begin with the raw amino-acid sequence, 244 residues long: Phosphonates import ATP-binding protein PhnC (244 aa).

Residues 6–244 (IECHNLETAY…LQAQFVVNSQ (239 aa)) enclose the ABC transporter domain. Position 41–48 (41–48 (GLNGAGKS)) interacts with ATP.

This sequence belongs to the ABC transporter superfamily. Phosphonates importer (TC 3.A.1.9.1) family. As to quaternary structure, the complex is composed of two ATP-binding proteins (PhnC), two transmembrane proteins (PhnE) and a solute-binding protein (PhnD).

It localises to the cell inner membrane. The enzyme catalyses phosphonate(out) + ATP + H2O = phosphonate(in) + ADP + phosphate + H(+). Part of the ABC transporter complex PhnCDE involved in phosphonates import. Responsible for energy coupling to the transport system. The chain is Phosphonates import ATP-binding protein PhnC from Trichormus variabilis (strain ATCC 29413 / PCC 7937) (Anabaena variabilis).